The following is a 77-amino-acid chain: NAD(P)H-quinone oxidoreductase subunit L (77 aa).

2 consecutive transmembrane segments (helical) span residues 12 to 32 and 47 to 67; these read LIAYIGIISTYLLVIPLLLFY and LGIYGLVFLFFPGLILFSPFL.

The protein belongs to the complex I NdhL subunit family. As to quaternary structure, NDH-1 can be composed of about 15 different subunits; different subcomplexes with different compositions have been identified which probably have different functions.

It localises to the cellular thylakoid membrane. It carries out the reaction a plastoquinone + NADH + (n+1) H(+)(in) = a plastoquinol + NAD(+) + n H(+)(out). The catalysed reaction is a plastoquinone + NADPH + (n+1) H(+)(in) = a plastoquinol + NADP(+) + n H(+)(out). In terms of biological role, NDH-1 shuttles electrons from an unknown electron donor, via FMN and iron-sulfur (Fe-S) centers, to quinones in the respiratory and/or the photosynthetic chain. The immediate electron acceptor for the enzyme in this species is believed to be plastoquinone. Couples the redox reaction to proton translocation, and thus conserves the redox energy in a proton gradient. Cyanobacterial NDH-1 also plays a role in inorganic carbon-concentration. This is NAD(P)H-quinone oxidoreductase subunit L from Prochlorococcus marinus (strain MIT 9301).